The chain runs to 318 residues: Nodulation protein D 2 (318 aa).

The 58-residue stretch at Leu-6 to Thr-63 folds into the HTH lysR-type domain. Positions Leu-23–Gly-42 form a DNA-binding region, H-T-H motif.

This sequence belongs to the LysR transcriptional regulatory family.

In terms of biological role, nodD regulates the expression of the nodABCFE genes which encode other nodulation proteins. NodD is also a negative regulator of its own expression. Binds flavonoids as inducers. This is Nodulation protein D 2 (nodD2) from Rhizobium leguminosarum bv. phaseoli.